Consider the following 69-residue polypeptide: Small, acid-soluble spore protein I (69 aa).

The protein belongs to the SspI family.

It is found in the spore core. The chain is Small, acid-soluble spore protein I from Bacillus mycoides (strain KBAB4) (Bacillus weihenstephanensis).